The chain runs to 245 residues: Probable phosphatase CKO_02035 (245 aa).

The Zn(2+) site is built by His7, His9, His15, His40, Glu73, His101, His131, Asp192, and His194.

It belongs to the PHP family. Homotrimer. Requires Zn(2+) as cofactor.

This is Probable phosphatase CKO_02035 from Citrobacter koseri (strain ATCC BAA-895 / CDC 4225-83 / SGSC4696).